Reading from the N-terminus, the 534-residue chain is Peptide chain release factor 3 (534 aa).

The region spanning 9–278 (ARRRTFAIIS…FFVEHAPSPQ (270 aa)) is the tr-type G domain. Residues 18–25 (SHPDAGKT), 86–90 (DTPGH), and 140–143 (NKLD) contribute to the GTP site.

This sequence belongs to the TRAFAC class translation factor GTPase superfamily. Classic translation factor GTPase family. PrfC subfamily.

Its subcellular location is the cytoplasm. Increases the formation of ribosomal termination complexes and stimulates activities of RF-1 and RF-2. It binds guanine nucleotides and has strong preference for UGA stop codons. It may interact directly with the ribosome. The stimulation of RF-1 and RF-2 is significantly reduced by GTP and GDP, but not by GMP. The chain is Peptide chain release factor 3 from Xylella fastidiosa (strain M23).